We begin with the raw amino-acid sequence, 326 residues long: Tagatose 1,6-diphosphate aldolase (326 aa).

The protein belongs to the aldolase LacD family.

It catalyses the reaction D-tagatofuranose 1,6-bisphosphate = D-glyceraldehyde 3-phosphate + dihydroxyacetone phosphate. It functions in the pathway carbohydrate metabolism; D-tagatose 6-phosphate degradation; D-glyceraldehyde 3-phosphate and glycerone phosphate from D-tagatose 6-phosphate: step 2/2. The polypeptide is Tagatose 1,6-diphosphate aldolase (Staphylococcus aureus (strain bovine RF122 / ET3-1)).